Reading from the N-terminus, the 146-residue chain is uncharacterized protein (146 aa).

This is an uncharacterized protein from Thermoproteus tenax virus 1 (strain KRA1) (TTV1).